The primary structure comprises 389 residues: 26S proteasome regulatory subunit 10B (389 aa).

An N6-acetyllysine modification is found at K72. ATP is bound at residue 174-181; that stretch reads GPPGTGKT. K206 carries the post-translational modification N6-acetyllysine. A Phosphoserine modification is found at S244.

The protein belongs to the AAA ATPase family. As to quaternary structure, component of the 19S proteasome regulatory particle complex. The 26S proteasome consists of a 20S core particle (CP) and two 19S regulatory subunits (RP). The regulatory particle is made of a lid composed of 9 subunits, a base containing 6 ATPases including PSMC6 and few additional components. Interacts with PAAF1.

Its subcellular location is the cytoplasm. It is found in the nucleus. In terms of biological role, component of the 26S proteasome, a multiprotein complex involved in the ATP-dependent degradation of ubiquitinated proteins. This complex plays a key role in the maintenance of protein homeostasis by removing misfolded or damaged proteins, which could impair cellular functions, and by removing proteins whose functions are no longer required. Therefore, the proteasome participates in numerous cellular processes, including cell cycle progression, apoptosis, or DNA damage repair. PSMC6 belongs to the heterohexameric ring of AAA (ATPases associated with diverse cellular activities) proteins that unfolds ubiquitinated target proteins that are concurrently translocated into a proteolytic chamber and degraded into peptides. The sequence is that of 26S proteasome regulatory subunit 10B (PSMC6) from Homo sapiens (Human).